Here is a 440-residue protein sequence, read N- to C-terminus: MDQLAHHYRAHIAELNRRVAEILSREALSGLVIHSGQPHRMFLDDINYPFKANPHFKAWLPVLDNPNCWLVVNGRDKPQLIFYRPVDFWHKVSDVPDMFWTEYFDIKLLTKADKVAEFLPTDIANWAYLGEHLDVAEVLGFTSRNPDAVMSYLHYHRTTKTEYELECMRRANQIAVQGHLAAKNAFYNGASEFEIQQHYLSAVGQSENEVPYGNIIALNQNAAILHYTALEHQSPAKRLSFLIDAGASYFGYASDITRTYAFEKNRFDELITAMNKAQLELIDMMRPGVRYPDLHLATHAKVAQMLLDFDLATGDVQGLIDQGITSAFFPHGLGHMLGLQVHDVGGFSHDERGTHIAAPEAHPFLRCTRILAPNQVLTMEPGLYIIDTLLNELKQDSRGQQINWQTVDELRPFGGIRIEDNVIVHQDRNENMTRELGLTD.

Mn(2+) contacts are provided by Asp-244, Asp-255, His-335, Glu-380, and Glu-419.

The protein belongs to the peptidase M24B family. Bacterial-type prolidase subfamily. It depends on Mn(2+) as a cofactor.

It carries out the reaction Xaa-L-Pro dipeptide + H2O = an L-alpha-amino acid + L-proline. In terms of biological role, splits dipeptides with a prolyl residue in the C-terminal position. This Shewanella baltica (strain OS195) protein is Xaa-Pro dipeptidase.